We begin with the raw amino-acid sequence, 488 residues long: Metalloreductase STEAP3 (488 aa).

Residues 1–207 lie on the Cytoplasmic side of the membrane; it reads MSGEMDKPLI…AREVEAIPLR (207 aa). Phosphoserine is present on residues serine 11, serine 17, and serine 20. NADP(+)-binding positions include 36–39, 58–59, 91–98, asparagine 116, and alanine 151; these read SGDF, SR, and VFREHYSS. FAD contacts are provided by tryptophan 152 and aspartate 160. The chain crosses the membrane as a helical span at residues 208–228; it reads LLPSWKVPTLLALGLFVCFYA. Fe(3+) is bound at residue tyrosine 229. Topologically, residues 229 to 258 are vesicular; it reads YNFIRDVLQPYIRKDENKFYKMPLSVVNTT. Asparagine 256 carries an N-linked (GlcNAc...) asparagine glycan. A helical membrane pass occupies residues 259-279; the sequence is LPCVAYVLLSLVYLPGVLAAA. Residues 259-407 enclose the Ferric oxidoreductase domain; sequence LPCVAYVLLS…LGFVALMLST (149 aa). The Cytoplasmic portion of the chain corresponds to 280–304; the sequence is LQLRRGTKYQRFPDWLDHWLQHRKQ. FAD contacts are provided by glutamine 281, arginine 302, and lysine 303. A helical membrane pass occupies residues 305-325; it reads IGLLSFFFAMLHALYSFCLPL. Histidine 316 is a heme b binding site. Residue tyrosine 319 coordinates Fe(3+). Topologically, residues 326 to 358 are vesicular; it reads RRSHRYDLVNLAVKQVLANKSRLWVEEEVWRME. Residues 359-379 traverse the membrane as a helical segment; it reads IYLSLGVLALGMLSLLAVTSI. Residue serine 378 participates in FAD binding. The Cytoplasmic portion of the chain corresponds to 380–390; sequence PSIANSLNWKE. A helical transmembrane segment spans residues 391 to 411; that stretch reads FSFVQSTLGFVALMLSTMHTL. Glutamine 395 is an FAD binding site. Histidine 409 contributes to the heme b binding site. The Vesicular portion of the chain corresponds to 412 to 433; the sequence is TYGWTRAFEENHYKFYLPPTFT. A helical transmembrane segment spans residues 434 to 454; that stretch reads LTLLLPCVIILAKGLFLLPCL. Residues 455 to 488 are Cytoplasmic-facing; the sequence is SHRLTKIRRGWERDGAVKFMLPAGHTQGEKTSHV. Phosphoserine is present on serine 486.

This sequence belongs to the STEAP family. In terms of assembly, homodimer. Interacts with BNIP3L, MYT1, RHBDL4/RHBDD1 and TCTP. The cofactor is FAD. Heme b serves as cofactor. Proteolytically cleaved by RHBDL4/RHBDD1. RHBDL4/RHBDD1-induced cleavage occurs at multiple sites in a glycosylation-independent manner. In terms of processing, glycosylated.

Its subcellular location is the endosome membrane. The enzyme catalyses 2 Fe(2+) + NADP(+) + H(+) = 2 Fe(3+) + NADPH. The catalysed reaction is 2 Cu(+) + NADP(+) + H(+) = 2 Cu(2+) + NADPH. In terms of biological role, integral membrane protein that functions as a NADPH-dependent ferric-chelate reductase, using NADPH from one side of the membrane to reduce a Fe(3+) chelate that is bound on the other side of the membrane. Mediates sequential transmembrane electron transfer from NADPH to FAD and onto heme, and finally to the Fe(3+) chelate. Can also reduce Cu(2+) to Cu(1+). Mediates efficient transferrin-dependent iron uptake in erythroid cells. May play a role downstream of p53/TP53 to interface apoptosis and cell cycle progression. Indirectly involved in exosome secretion by facilitating the secretion of proteins such as TCTP. The polypeptide is Metalloreductase STEAP3 (Steap3) (Rattus norvegicus (Rat)).